A 228-amino-acid polypeptide reads, in one-letter code: Ribosomal RNA small subunit methyltransferase G (228 aa).

Residues glycine 82, leucine 87, 105–107, 133–134, and arginine 147 each bind S-adenosyl-L-methionine; these read DAT and VE.

This sequence belongs to the methyltransferase superfamily. RNA methyltransferase RsmG family.

It is found in the cytoplasm. Functionally, specifically methylates the N7 position of a guanine in 16S rRNA. The sequence is that of Ribosomal RNA small subunit methyltransferase G from Pelodictyon phaeoclathratiforme (strain DSM 5477 / BU-1).